Consider the following 38-residue polypeptide: Photosystem II reaction center protein L (38 aa).

A helical transmembrane segment spans residues 17 to 37 (SLYWGLLLIFVLAILFSNYFF).

Belongs to the PsbL family. In terms of assembly, PSII is composed of 1 copy each of membrane proteins PsbA, PsbB, PsbC, PsbD, PsbE, PsbF, PsbH, PsbI, PsbJ, PsbK, PsbL, PsbM, PsbT, PsbX, PsbY, PsbZ, Psb30/Ycf12, at least 3 peripheral proteins of the oxygen-evolving complex and a large number of cofactors. It forms dimeric complexes.

It localises to the plastid. The protein resides in the chloroplast thylakoid membrane. Functionally, one of the components of the core complex of photosystem II (PSII). PSII is a light-driven water:plastoquinone oxidoreductase that uses light energy to abstract electrons from H(2)O, generating O(2) and a proton gradient subsequently used for ATP formation. It consists of a core antenna complex that captures photons, and an electron transfer chain that converts photonic excitation into a charge separation. This subunit is found at the monomer-monomer interface and is required for correct PSII assembly and/or dimerization. In Aethionema cordifolium (Lebanon stonecress), this protein is Photosystem II reaction center protein L.